Consider the following 114-residue polypeptide: UPF0145 protein STK_10800 (114 aa).

Belongs to the UPF0145 family.

The protein is UPF0145 protein STK_10800 of Sulfurisphaera tokodaii (strain DSM 16993 / JCM 10545 / NBRC 100140 / 7) (Sulfolobus tokodaii).